Reading from the N-terminus, the 25-residue chain is Small ribosomal subunit protein eS32B (25 aa).

The tract at residues 1–25 is disordered; that stretch reads MRAKWRKKRTRRLKRKRRKVRARSK.

The protein belongs to the eukaryotic ribosomal protein eS32 family. Component of the small ribosomal subunit (SSU). Mature yeast ribosomes consist of a small (40S) and a large (60S) subunit. The 40S small subunit contains 1 molecule of ribosomal RNA (18S rRNA) and 33 different proteins (encoded by 57 genes). The large 60S subunit contains 3 rRNA molecules (25S, 5.8S and 5S rRNA) and 46 different proteins (encoded by 81 genes).

It is found in the cytoplasm. Functionally, component of the ribosome, a large ribonucleoprotein complex responsible for the synthesis of proteins in the cell. The small ribosomal subunit (SSU) binds messenger RNAs (mRNAs) and translates the encoded message by selecting cognate aminoacyl-transfer RNA (tRNA) molecules. The large subunit (LSU) contains the ribosomal catalytic site termed the peptidyl transferase center (PTC), which catalyzes the formation of peptide bonds, thereby polymerizing the amino acids delivered by tRNAs into a polypeptide chain. The nascent polypeptides leave the ribosome through a tunnel in the LSU and interact with protein factors that function in enzymatic processing, targeting, and the membrane insertion of nascent chains at the exit of the ribosomal tunnel. In Saccharomyces cerevisiae (strain ATCC 204508 / S288c) (Baker's yeast), this protein is Small ribosomal subunit protein eS32B.